The chain runs to 283 residues: Tetraspanin-33 (283 aa).

Residues 1–24 lie on the Cytoplasmic side of the membrane; it reads MARRPGAPAAYGEDFSFVSPLVKY. The helical transmembrane segment at 25 to 45 threads the bilayer; it reads LLFFFNMLFWVISMVMVAVGV. Residues 46–64 are Extracellular-facing; sequence YARLMKHEEAALACLAVDP. Residues 65-85 form a helical membrane-spanning segment; that stretch reads AILLIVVGILMFLLTFCGCIG. Topologically, residues 86–96 are cytoplasmic; sequence SLRENICLLQT. Residues 97-117 traverse the membrane as a helical segment; sequence FSLCLTVVFLLQLAAGVLGFV. Topologically, residues 118-235 are extracellular; the sequence is FSDKVRGKVS…DRLVNWIHSN (118 aa). Disulfide bonds link C156–C224, C157–C189, C173–C183, and C190–C203. N-linked (GlcNAc...) asparagine glycosylation is present at N172. The helical transmembrane segment at 236–256 threads the bilayer; it reads LFVLGGVALGLAIPQLVGIML. At 257 to 283 the chain is on the cytoplasmic side; sequence SMILVSQIKDQIKLQLYNQQHRADPWY.

It belongs to the tetraspanin (TM4SF) family. In terms of assembly, homodimer; disulfide-linked. Interacts (via extracellular domain) with ADAM10 (via extracellular domain). Interacts (via cytoplasmic domain) with PLEKHA7 (via WW domains); the interaction is dependent on PDZD11 being bound to PLEKHA7 and facilitates the docking of ADAM10 to zonula adherens.

Its subcellular location is the cell membrane. It localises to the cell junction. The protein localises to the adherens junction. It is found in the cytoplasm. Functionally, part of TspanC8 subgroup, composed of 6 members that interact with the transmembrane metalloprotease ADAM10. This interaction is required for ADAM10 exit from the endoplasmic reticulum and for enzymatic maturation and trafficking to the cell surface as well as substrate specificity. Different TspanC8/ADAM10 complexes have distinct substrates. Plays an important role in normal erythropoiesis. It has a role in the differentiation of erythroid progenitors. Negatively regulates ligand-induced Notch activity probably by regulating ADAM10 activity. Mediates docking of ADAM10 to zonula adherens by interacting with ADAM10 and, in a PDZD11-dependent manner, with the zonula adherens protein PLEKHA7. This is Tetraspanin-33 (TSPAN33) from Bos taurus (Bovine).